The following is a 185-amino-acid chain: Ribosome-recycling factor (185 aa).

It belongs to the RRF family.

The protein localises to the cytoplasm. Its function is as follows. Responsible for the release of ribosomes from messenger RNA at the termination of protein biosynthesis. May increase the efficiency of translation by recycling ribosomes from one round of translation to another. This Listeria welshimeri serovar 6b (strain ATCC 35897 / DSM 20650 / CCUG 15529 / CIP 8149 / NCTC 11857 / SLCC 5334 / V8) protein is Ribosome-recycling factor.